The sequence spans 945 residues: Bifunctional glutamine synthetase adenylyltransferase/adenylyl-removing enzyme (945 aa).

The tract at residues 1 to 441 (MLPLSAALQT…VFNDLIGDDS (441 aa)) is adenylyl removase. The interval 450-945 (YQHYHSLWQD…VRASWAKWLG (496 aa)) is adenylyl transferase.

This sequence belongs to the GlnE family. Requires Mg(2+) as cofactor.

It carries out the reaction [glutamine synthetase]-O(4)-(5'-adenylyl)-L-tyrosine + phosphate = [glutamine synthetase]-L-tyrosine + ADP. The catalysed reaction is [glutamine synthetase]-L-tyrosine + ATP = [glutamine synthetase]-O(4)-(5'-adenylyl)-L-tyrosine + diphosphate. Its function is as follows. Involved in the regulation of glutamine synthetase GlnA, a key enzyme in the process to assimilate ammonia. When cellular nitrogen levels are high, the C-terminal adenylyl transferase (AT) inactivates GlnA by covalent transfer of an adenylyl group from ATP to specific tyrosine residue of GlnA, thus reducing its activity. Conversely, when nitrogen levels are low, the N-terminal adenylyl removase (AR) activates GlnA by removing the adenylyl group by phosphorolysis, increasing its activity. The regulatory region of GlnE binds the signal transduction protein PII (GlnB) which indicates the nitrogen status of the cell. This is Bifunctional glutamine synthetase adenylyltransferase/adenylyl-removing enzyme from Serratia proteamaculans (strain 568).